We begin with the raw amino-acid sequence, 195 residues long: CASP-like protein 1B1 (195 aa).

Residues 1 to 25 (MDLEKGKKPSEQAAACRIMQVKDKL) are Cytoplasmic-facing. A helical transmembrane segment spans residues 26-46 (ITLQPVVRACVFLATAVAAVI). The Extracellular segment spans residues 47–78 (MGLNKQSYTTVVAIVGTRPVTQTFTAKFKDTP). Residues 79-99 (AFVFFVIANAIASGYNLMVLV) form a helical membrane-spanning segment. At 100–114 (TRRILQRRAQSLSVH) the chain is on the cytoplasmic side. Residues 115-135 (LLDMVILTLLATGSATAASMA) traverse the membrane as a helical segment. The Extracellular portion of the chain corresponds to 136–160 (QLGKNGNLHARWNPICDKFGSFCNH). A helical membrane pass occupies residues 161–181 (GGIALMSSFIGVALMLALNLL). Topologically, residues 182 to 195 (SAAANSPRSNVTGQ) are cytoplasmic.

This sequence belongs to the Casparian strip membrane proteins (CASP) family. As to quaternary structure, homodimer and heterodimers.

It localises to the cell membrane. In Oryza sativa subsp. indica (Rice), this protein is CASP-like protein 1B1.